The following is a 208-amino-acid chain: Large ribosomal subunit protein uL4 (208 aa).

Positions 51–79 are disordered; that stretch reads AKERAEVSFSTKKLKKQKGTGGARAGSRK.

This sequence belongs to the universal ribosomal protein uL4 family. Part of the 50S ribosomal subunit.

One of the primary rRNA binding proteins, this protein initially binds near the 5'-end of the 23S rRNA. It is important during the early stages of 50S assembly. It makes multiple contacts with different domains of the 23S rRNA in the assembled 50S subunit and ribosome. Its function is as follows. Forms part of the polypeptide exit tunnel. This Cytophaga hutchinsonii (strain ATCC 33406 / DSM 1761 / CIP 103989 / NBRC 15051 / NCIMB 9469 / D465) protein is Large ribosomal subunit protein uL4.